Here is a 120-residue protein sequence, read N- to C-terminus: Large ribosomal subunit protein bL17 (120 aa).

This sequence belongs to the bacterial ribosomal protein bL17 family. Part of the 50S ribosomal subunit. Contacts protein L32.

This is Large ribosomal subunit protein bL17 from Bacillus velezensis (strain DSM 23117 / BGSC 10A6 / LMG 26770 / FZB42) (Bacillus amyloliquefaciens subsp. plantarum).